The following is a 53-amino-acid chain: uncharacterized protein (53 aa).

The helical transmembrane segment at 4–24 threads the bilayer; the sequence is FILLIVGFIYGAGGVLLYSVY.

The protein localises to the host membrane. This is an uncharacterized protein from Acidianus bottle-shaped virus (isolate Italy/Pozzuoli) (ABV).